Reading from the N-terminus, the 125-residue chain is Apoptosis inhibitor Rv3655c (125 aa).

An N-terminal signal peptide occupies residues 1 to 33 (MEAALAIATLVLVLVLCLAGVTAVSMQVRCIDA).

Interacts with human E3 ubiquitin-protein ligase RNF213.

The protein localises to the secreted. It localises to the host cytoplasm. Functionally, effector protein that participates in the suppression of macrophage apoptosis by blocking the extrinsic pathway. Interferes with caspase-8 activation and binds to the host E3 ubiquitin-protein ligase RNF213, whose fusion partners have anti-apoptotic function. The sequence is that of Apoptosis inhibitor Rv3655c from Mycobacterium tuberculosis (strain ATCC 25618 / H37Rv).